We begin with the raw amino-acid sequence, 89 residues long: Small ribosomal subunit protein uS15 (89 aa).

Belongs to the universal ribosomal protein uS15 family. Part of the 30S ribosomal subunit. Forms a bridge to the 50S subunit in the 70S ribosome, contacting the 23S rRNA.

Its function is as follows. One of the primary rRNA binding proteins, it binds directly to 16S rRNA where it helps nucleate assembly of the platform of the 30S subunit by binding and bridging several RNA helices of the 16S rRNA. In terms of biological role, forms an intersubunit bridge (bridge B4) with the 23S rRNA of the 50S subunit in the ribosome. The protein is Small ribosomal subunit protein uS15 of Shewanella sediminis (strain HAW-EB3).